Reading from the N-terminus, the 389-residue chain is Indole-3-acetate monooxygenase (389 aa).

This sequence belongs to the HpaH/HsaA monooxygenase family.

The enzyme catalyses (indol-3-yl)acetate + NADH + O2 + H(+) = 2-hydroxy-(1H-indol-3-yl)acetate + NAD(+) + H2O. It catalyses the reaction indole + NADH + O2 + H(+) = indoxyl + NAD(+) + H2O. In terms of biological role, involved in the degradation of the plant hormone indole-3-acetic acid (IAA). Catalyzes the first step of the pathway, the conversion of IAA to 2-hydroxy-IAA (2-OH-IAA). Can also convert indole to indoxyl, which spontaneously dimerizes in the presence of oxygen to form the blue pigment indigo. This is Indole-3-acetate monooxygenase from Pseudomonas putida (Arthrobacter siderocapsulatus).